An 879-amino-acid chain; its full sequence is MTELLADEVFKDRVRIFQEYLEHDTDDANVTLYQEAILRMLNMGQRRLIVNIDELRDYNRELADGVLLKPLEYVEPFDEALRNVVSTLIDPVVHKDLKDKLFYVGFRGSFGDHHVNPRTLRAMHLNKMISLEGIVTRCSFVRPKVIKSVHYCEATKRHHFKQYADATMNGGLSFQSTVYPTQDENGNPLSIEFGFSTFRDHQSISLQEMPERAPPGQLPRSIDILLDDDLVDTVKPGDRVNIVGQYRSMGSKTSGNTSATFRTVLLANNVVLLGNKPGLGNVGGGALDITDADIRNINKLARKKNVFELLSTSLAPSIYGYEYVKQAILLLLLGGTEKNLTNGTHIRGDINILMVGDPSTAKSQLLRFVLNTAPLAIATTGRGSSGVGLTAAVTTDKETGERRLEAGAMVLADRGVVCIDEFDKMSDIDRVAIHEVMEQQTVTIAKAGIHTSLNARCSVIAAANPIYGQYDIRKDPHQNIALPDSMLSRFDLLFIVTDDIDDKKDRALSEHVLRMHRYLPPGVEPGTPVRDSLNSVLNVGATNAAGVSTENVEQEVETPVWETFSSLLHANARTKKKELLNINFVRKYIQYAKSRIHPILNQATAEYITNIYCGLRNDDLQGNQRRTSPLTARTLETLIRLSTAHAKARLSSVVEVKDAKAAEKILRYALFREVVKPKRKKHKKQRLEAGEEFDSEDDNSDDMDIEESEEEMDTNMVIDSGSRRVTRSQNATSQSQESGSEIGSSIAGTAGSYNVGTSNTQLSWPSTHSTLPATSRELASSDRNINTGTSVASEVSASVSEQSTVSLPREKMSVFMARLASLTKSELFSEECASLEDVLESINNIEDDVGFSREEAIVALKEMDAQNKIMFSDNVVYRI.

The 208-residue stretch at 306–513 (VFELLSTSLA…KDRALSEHVL (208 aa)) folds into the MCM domain. 356–363 (GDPSTAKS) lines the ATP pocket. The Arginine finger signature appears at 488 to 491 (SRFD). The disordered stretch occupies residues 679–778 (RKKHKKQRLE…STLPATSREL (100 aa)). Acidic residues predominate over residues 690–713 (GEEFDSEDDNSDDMDIEESEEEMD). Positions 732–752 (TSQSQESGSEIGSSIAGTAGS) are enriched in low complexity. The segment covering 754–778 (NVGTSNTQLSWPSTHSTLPATSREL) has biased composition (polar residues).

Belongs to the MCM family. As to quaternary structure, component of the mcm2-7 complex. The complex forms a toroidal hexameric ring with the proposed subunit order mcm2-mcm6-mcm4-mcm7-mcm3-mcm5. The heterodimers of mcm4/mcm6 and mcm3/mcm5 interact with mcm2 and mcm7.

Its subcellular location is the nucleus. It catalyses the reaction ATP + H2O = ADP + phosphate + H(+). Its function is as follows. Acts as a component of the mcm2-7 complex (mcm complex) which is the putative replicative helicase essential for 'once per cell cycle' DNA replication initiation and elongation in eukaryotic cells. The active ATPase sites in the mcm2-7 ring are formed through the interaction surfaces of two neighboring subunits such that a critical structure of a conserved arginine finger motif is provided in trans relative to the ATP-binding site of the Walker A box of the adjacent subunit. The six ATPase active sites, however, are likely to contribute differentially to the complex helicase activity. The protein is DNA replication licensing factor mcm3 (mcm3) of Schizosaccharomyces pombe (strain 972 / ATCC 24843) (Fission yeast).